We begin with the raw amino-acid sequence, 567 residues long: Chitinase 3 (567 aa).

Positions 1–16 are cleaved as a signal peptide; that stretch reads MLYLLTIFSLLLPALA. The GH18 domain occupies 23 to 313; the sequence is SNVAVYWGQN…ENMKAIVKKA (291 aa). Glutamate 157 acts as the Proton donor in catalysis. Residue asparagine 159 is glycosylated (N-linked (GlcNAc...) asparagine). Residues 313-471 form a disordered region; sequence ASPGEETTSS…TSALSSSTTT (159 aa). Composition is skewed to low complexity over residues 319–436 and 444–471; these read TTSS…SLSS and STTT…STTT.

Belongs to the glycosyl hydrolase 18 family. Chitinase class III subfamily.

The protein resides in the secreted. It catalyses the reaction Random endo-hydrolysis of N-acetyl-beta-D-glucosaminide (1-&gt;4)-beta-linkages in chitin and chitodextrins.. Chitinase involved in the remodeling of chitin in the fungal cell wall. Plays a role in cell separation. The protein is Chitinase 3 (CHT3) of Candida albicans (strain SC5314 / ATCC MYA-2876) (Yeast).